Reading from the N-terminus, the 227-residue chain is PKHD-type hydroxylase Patl_2273 (227 aa).

In terms of domain architecture, Fe2OG dioxygenase spans 78-178 (KIYPPKFNRY…RTASFFWIES (101 aa)). His96, Asp98, and His159 together coordinate Fe cation. Arg169 lines the 2-oxoglutarate pocket.

Requires Fe(2+) as cofactor. L-ascorbate is required as a cofactor.

In Pseudoalteromonas atlantica (strain T6c / ATCC BAA-1087), this protein is PKHD-type hydroxylase Patl_2273.